The primary structure comprises 146 residues: MTSSKKPSNSSAKNENLYAIAETSGQQFWFEVDKYYDIDRLNAKEKDKITIDKILLIKDKDNISLGQPYVKNAKIELEVVSHKRDKKIIVYKMRPKKKTRRKMGHRQELTRVMVKSISITNSTPKTSSKTEVKKKSTSPKASNPEN.

The segment at 96-146 (KKKTRRKMGHRQELTRVMVKSISITNSTPKTSSKTEVKKKSTSPKASNPEN) is disordered.

The protein belongs to the bacterial ribosomal protein bL21 family. In terms of assembly, part of the 50S ribosomal subunit. Contacts protein L20.

In terms of biological role, this protein binds to 23S rRNA in the presence of protein L20. This Prochlorococcus marinus subsp. pastoris (strain CCMP1986 / NIES-2087 / MED4) protein is Large ribosomal subunit protein bL21.